A 155-amino-acid polypeptide reads, in one-letter code: Dau c 1 isoallergen Dau c 1.0401 (155 aa).

It belongs to the BetVI family. In terms of assembly, monomer. Expressed in roots (at protein level). Expressed in roots.

This is Dau c 1 isoallergen Dau c 1.0401 from Daucus carota subsp. sativus (Carrot).